Reading from the N-terminus, the 315-residue chain is Ribosomal RNA small subunit methyltransferase H (315 aa).

Residues 35–37 (AGH), Asp55, Phe84, Asp105, and Gln112 each bind S-adenosyl-L-methionine.

This sequence belongs to the methyltransferase superfamily. RsmH family.

The protein resides in the cytoplasm. It carries out the reaction cytidine(1402) in 16S rRNA + S-adenosyl-L-methionine = N(4)-methylcytidine(1402) in 16S rRNA + S-adenosyl-L-homocysteine + H(+). Its function is as follows. Specifically methylates the N4 position of cytidine in position 1402 (C1402) of 16S rRNA. This Streptococcus agalactiae serotype Ia (strain ATCC 27591 / A909 / CDC SS700) protein is Ribosomal RNA small subunit methyltransferase H.